The following is a 559-amino-acid chain: Dihydroxy-acid dehydratase (559 aa).

Cys-49 is a binding site for [2Fe-2S] cluster. Asp-81 contributes to the Mg(2+) binding site. Residue Cys-122 participates in [2Fe-2S] cluster binding. The Mg(2+) site is built by Asp-123 and Lys-124. Lys-124 is modified (N6-carboxylysine). Cys-194 is a [2Fe-2S] cluster binding site. Glu-446 serves as a coordination point for Mg(2+). The active-site Proton acceptor is the Ser-472.

Belongs to the IlvD/Edd family. As to quaternary structure, homodimer. The cofactor is [2Fe-2S] cluster. Requires Mg(2+) as cofactor.

The enzyme catalyses (2R)-2,3-dihydroxy-3-methylbutanoate = 3-methyl-2-oxobutanoate + H2O. It catalyses the reaction (2R,3R)-2,3-dihydroxy-3-methylpentanoate = (S)-3-methyl-2-oxopentanoate + H2O. Its pathway is amino-acid biosynthesis; L-isoleucine biosynthesis; L-isoleucine from 2-oxobutanoate: step 3/4. It functions in the pathway amino-acid biosynthesis; L-valine biosynthesis; L-valine from pyruvate: step 3/4. Its function is as follows. Functions in the biosynthesis of branched-chain amino acids. Catalyzes the dehydration of (2R,3R)-2,3-dihydroxy-3-methylpentanoate (2,3-dihydroxy-3-methylvalerate) into 2-oxo-3-methylpentanoate (2-oxo-3-methylvalerate) and of (2R)-2,3-dihydroxy-3-methylbutanoate (2,3-dihydroxyisovalerate) into 2-oxo-3-methylbutanoate (2-oxoisovalerate), the penultimate precursor to L-isoleucine and L-valine, respectively. This Prochlorococcus marinus subsp. pastoris (strain CCMP1986 / NIES-2087 / MED4) protein is Dihydroxy-acid dehydratase.